A 522-amino-acid chain; its full sequence is Maturase K (522 aa).

Belongs to the intron maturase 2 family. MatK subfamily.

It localises to the plastid. Its subcellular location is the chloroplast. Usually encoded in the trnK tRNA gene intron. Probably assists in splicing its own and other chloroplast group II introns. In Iris sanguinea (Japanese iris), this protein is Maturase K.